The chain runs to 462 residues: ATP synthase subunit beta 2 (462 aa).

151-158 (GGAGVGKT) is a binding site for ATP.

This sequence belongs to the ATPase alpha/beta chains family. In terms of assembly, F-type ATPases have 2 components, CF(1) - the catalytic core - and CF(0) - the membrane proton channel. CF(1) has five subunits: alpha(3), beta(3), gamma(1), delta(1), epsilon(1). CF(0) has three main subunits: a(1), b(2) and c(9-12). The alpha and beta chains form an alternating ring which encloses part of the gamma chain. CF(1) is attached to CF(0) by a central stalk formed by the gamma and epsilon chains, while a peripheral stalk is formed by the delta and b chains.

It localises to the cell inner membrane. It catalyses the reaction ATP + H2O + 4 H(+)(in) = ADP + phosphate + 5 H(+)(out). Its function is as follows. Produces ATP from ADP in the presence of a proton gradient across the membrane. The catalytic sites are hosted primarily by the beta subunits. This Chlorobaculum tepidum (strain ATCC 49652 / DSM 12025 / NBRC 103806 / TLS) (Chlorobium tepidum) protein is ATP synthase subunit beta 2.